Reading from the N-terminus, the 319-residue chain is Beta-ketoacyl-[acyl-carrier-protein] synthase III (319 aa).

Residues Cys112 and His246 contribute to the active site. Residues 247–251 (QANFR) are ACP-binding. Residue Asn276 is part of the active site.

It belongs to the thiolase-like superfamily. FabH family. Homodimer.

It is found in the cytoplasm. The enzyme catalyses malonyl-[ACP] + acetyl-CoA + H(+) = 3-oxobutanoyl-[ACP] + CO2 + CoA. Its pathway is lipid metabolism; fatty acid biosynthesis. Catalyzes the condensation reaction of fatty acid synthesis by the addition to an acyl acceptor of two carbons from malonyl-ACP. Catalyzes the first condensation reaction which initiates fatty acid synthesis and may therefore play a role in governing the total rate of fatty acid production. Possesses both acetoacetyl-ACP synthase and acetyl transacylase activities. Its substrate specificity determines the biosynthesis of branched-chain and/or straight-chain of fatty acids. This chain is Beta-ketoacyl-[acyl-carrier-protein] synthase III, found in Shewanella oneidensis (strain ATCC 700550 / JCM 31522 / CIP 106686 / LMG 19005 / NCIMB 14063 / MR-1).